Here is a 155-residue protein sequence, read N- to C-terminus: Large ribosomal subunit protein uL13 (155 aa).

Belongs to the universal ribosomal protein uL13 family. In terms of assembly, part of the 50S ribosomal subunit.

This protein is one of the early assembly proteins of the 50S ribosomal subunit, although it is not seen to bind rRNA by itself. It is important during the early stages of 50S assembly. The protein is Large ribosomal subunit protein uL13 of Rickettsia akari (strain Hartford).